A 419-amino-acid chain; its full sequence is MNIIDELEWRGAINQQTDEEGLRKLVEEKKISLYCGVDPTGDSMHIGHLIPFMMMKRFQLAGHHPVILIGGATGTIGDPSGRQSERQLQTLEVVQHNVDALTAQMKKLFDFGGNSEVKMVNNYDWTHEINIIEFLRDYGKNFSINSMLAKDIVASRLDTGISFTEFTYQILQAMDFHHLYTKEDVQLQIGGSDQWGNITSGLDLIRKLEGHEAKVFGLTIPLLLKSDGTKFGKSAGGAVWLDPEKTTPFEFYQFWVNTDDRDVVKYLKYFTFLTKERIDELAVKVETEPHKREAQKVLAEEMTKFVHGEEALLQAVKITEALFSGDIKSLTADEIEQGFKEMPTFQSSKETKNIVEWLVDLGIEPSRRQAREDINNGAISMNGEKVTDVGTDVTVENSFDGRFIIIRKGKKNYSLVKLG.

Residue tyrosine 34 coordinates L-tyrosine. Positions 39-48 match the 'HIGH' region motif; it reads PTGDSMHIGH. The L-tyrosine site is built by tyrosine 168 and glutamine 172. The 'KMSKS' region motif lies at 230-234; sequence KFGKS. Residue lysine 233 participates in ATP binding. One can recognise an S4 RNA-binding domain in the interval 352 to 418; it reads KNIVEWLVDL…GKKNYSLVKL (67 aa).

Belongs to the class-I aminoacyl-tRNA synthetase family. TyrS type 1 subfamily. As to quaternary structure, homodimer.

Its subcellular location is the cytoplasm. It carries out the reaction tRNA(Tyr) + L-tyrosine + ATP = L-tyrosyl-tRNA(Tyr) + AMP + diphosphate + H(+). Functionally, catalyzes the attachment of tyrosine to tRNA(Tyr) in a two-step reaction: tyrosine is first activated by ATP to form Tyr-AMP and then transferred to the acceptor end of tRNA(Tyr). This Bacillus cereus (strain ATCC 10987 / NRS 248) protein is Tyrosine--tRNA ligase 2.